We begin with the raw amino-acid sequence, 870 residues long: DNA mismatch repair protein MutS (870 aa).

620–627 (GPNMAGKS) contributes to the ATP binding site.

The protein belongs to the DNA mismatch repair MutS family.

Its function is as follows. This protein is involved in the repair of mismatches in DNA. It is possible that it carries out the mismatch recognition step. This protein has a weak ATPase activity. The protein is DNA mismatch repair protein MutS of Syntrophotalea carbinolica (strain DSM 2380 / NBRC 103641 / GraBd1) (Pelobacter carbinolicus).